A 474-amino-acid polypeptide reads, in one-letter code: MSDIVSSSTDYSRRSPSSSSIGTNETDHTGFHEKRQGASSESLIPPAQRSSEESMPAPKLFPKLTSKPNPQLNLKDTLNKRVSDRLQALELNKSFDFSGTPRPMHPISHPLSQHKTPEFKHRKRNVESILTPKNPSLFSSSNAASQRGSLNTAPSNFAYSHSSSLQTSASSRPPVLSNGSFPRQTNTAPLNPPVHLKDNIRNSATPSTSQADIPTQYPINSTQKQQAKYEAEIEGYKAKLAGTYHEISVLQNTIVNVSGQLIAVNDQLQQLRSGKASTSPSTKDTNMRLVEGHNEETLALQRGKYTQEEVDKLIQERMEKVAEDLHAQYSAKHTQKINAFKANYARKYEATIQELQNQIGTAPNAPKISNSNWEEERRALKADNQTLQKQLEKAIQERQDMSDFLNNFKADMAKSDKLLMQQQSQQTGDLETLRLQLQALQEELRVEREERQQLIQMSEDLVIAMDQLNLEQKS.

A compositionally biased stretch (low complexity) spans 1–20 (MSDIVSSSTDYSRRSPSSSS). Disordered stretches follow at residues 1 to 79 (MSDI…DTLN), 93 to 114 (KSFD…LSQH), and 164 to 223 (SLQT…NSTQ). At Ser-17 the chain carries Phosphoserine. Positions 25-36 (ETDHTGFHEKRQ) are enriched in basic and acidic residues. The segment covering 66-76 (SKPNPQLNLKD) has biased composition (polar residues). Composition is skewed to polar residues over residues 177-189 (SNGS…NTAP) and 201-223 (RNSA…NSTQ). 2 coiled-coil regions span residues 219–273 (INST…QLRS) and 367–471 (KISN…LNLE).

Interacts with alp14.

It is found in the nucleus. The protein resides in the cytoplasm. It localises to the cytoskeleton. The protein localises to the spindle. Its subcellular location is the chromosome. It is found in the centromere. The protein resides in the kinetochore. Required for bipolar spindle formation and proper chromosome segregation. Has an indirect role in connecting the kinetochores and the plus end of pole to chromosome microtubules by targeting alp14 to the spindle pole body. Involved in the emergence of large microtubule organizing centers (MTOC) in interphase cells. Attaches to the minus ends of microtubules and associates with the sites of microtubule attachment on the nuclear envelope. This leads to the stabilization of the microtubule bundles. This Schizosaccharomyces pombe (strain 972 / ATCC 24843) (Fission yeast) protein is Microtubule protein alp7 (alp7).